A 397-amino-acid polypeptide reads, in one-letter code: Mediator of RNA polymerase II transcription subunit 3 (397 aa).

The residue at position 1 (M1) is an N-acetylmethionine. A compositionally biased stretch (low complexity) spans 147-165; sequence ASTPTTTATPHANPITHAH. 3 disordered regions span residues 147 to 227, 288 to 327, and 346 to 370; these read ASTP…AQAQ, SMGA…QSQL, and FQQQ…MGMN. 2 stretches are compositionally biased toward polar residues: residues 166-178 and 189-202; these read SLSN…TMQH and SGST…HNST. Residues 211–223 are compositionally biased toward basic residues; that stretch reads KKPRKPRQTKKAK. The span at 290–303 shows a compositional bias: polar residues; it reads GAQNQGGQVSMSQF. Residues 309–322 show a composition bias toward low complexity; it reads GSNPNTNTNSNNTP.

It belongs to the mediator complex subunit 3 family. In terms of assembly, component of the Mediator complex, which is composed of at least 21 subunits that form three structurally distinct submodules. The Mediator head module contains MED6, MED8, MED11, SRB4/MED17, SRB5/MED18, ROX3/MED19, SRB2/MED20 and SRB6/MED22, the middle module contains MED1, MED4, NUT1/MED5, MED7, CSE2/MED9, NUT2/MED10, SRB7/MED21 and SOH1/MED31, and the tail module contains MED2, PGD1/MED3, RGR1/MED14, GAL11/MED15 and SIN4/MED16. The head and the middle modules interact directly with RNA polymerase II, whereas the elongated tail module interacts with gene-specific regulatory proteins. PGD1/MED3 interacts directly with the CYC8-TUP1 corepressor proteins.

It localises to the nucleus. Functionally, component of the Mediator complex, a coactivator involved in the regulated transcription of nearly all RNA polymerase II-dependent genes. Mediator functions as a bridge to convey information from gene-specific regulatory proteins to the basal RNA polymerase II transcription machinery. The Mediator complex, having a compact conformation in its free form, is recruited to promoters by direct interactions with regulatory proteins and serves for the assembly of a functional preinitiation complex with RNA polymerase II and the general transcription factors. The Mediator complex unfolds to an extended conformation and partially surrounds RNA polymerase II, specifically interacting with the unphosphorylated form of the C-terminal domain (CTD) of RNA polymerase II. The Mediator complex dissociates from the RNA polymerase II holoenzyme and stays at the promoter when transcriptional elongation begins. PGD1/MED3 is also involved in direct repeat recombination. The protein is Mediator of RNA polymerase II transcription subunit 3 (PGD1) of Saccharomyces cerevisiae (strain ATCC 204508 / S288c) (Baker's yeast).